The chain runs to 311 residues: Putative dihydroorotate dehydrogenase A (fumarate) (311 aa).

Substrate-binding positions include Lys45, 69–73 (NSMGL), and Asn128. 45 to 46 (KT) provides a ligand contact to FMN. Asn128 serves as a coordination point for FMN. Cys131 (nucleophile) is an active-site residue. 2 residues coordinate FMN: Lys165 and Val193. 194–195 (NS) lines the substrate pocket. FMN-binding positions include Gly220, 248 to 249 (GG), and 270 to 271 (GT).

The protein belongs to the dihydroorotate dehydrogenase family. Type 1 subfamily. In terms of assembly, homodimer. It depends on FMN as a cofactor.

It is found in the cytoplasm. The enzyme catalyses (S)-dihydroorotate + fumarate = orotate + succinate. Its pathway is pyrimidine metabolism; UMP biosynthesis via de novo pathway. Its function is as follows. Catalyzes the conversion of dihydroorotate to orotate with fumarate as the electron acceptor. This Streptococcus pyogenes serotype M3 (strain SSI-1) protein is Putative dihydroorotate dehydrogenase A (fumarate) (pyrD).